The following is a 764-amino-acid chain: FHF complex subunit HOOK interacting protein 2A (764 aa).

Residues 190–236 (SEDGPKGQDPGSGDVSQCQQPQELSGATGVEPTESEEEPPHQMDDLS) form a disordered region. The span at 203–214 (DVSQCQQPQELS) shows a compositional bias: polar residues.

This sequence belongs to the FHIP family.

Functionally, may be required for proper functioning of the nervous system. The sequence is that of FHF complex subunit HOOK interacting protein 2A from Mus musculus (Mouse).